Here is a 111-residue protein sequence, read N- to C-terminus: Large ribosomal subunit protein uL22 (111 aa).

This sequence belongs to the universal ribosomal protein uL22 family. In terms of assembly, part of the 50S ribosomal subunit.

Functionally, this protein binds specifically to 23S rRNA; its binding is stimulated by other ribosomal proteins, e.g. L4, L17, and L20. It is important during the early stages of 50S assembly. It makes multiple contacts with different domains of the 23S rRNA in the assembled 50S subunit and ribosome. The globular domain of the protein is located near the polypeptide exit tunnel on the outside of the subunit, while an extended beta-hairpin is found that lines the wall of the exit tunnel in the center of the 70S ribosome. The protein is Large ribosomal subunit protein uL22 of Thermoanaerobacter pseudethanolicus (strain ATCC 33223 / 39E) (Clostridium thermohydrosulfuricum).